Consider the following 303-residue polypeptide: N-acetyl-D-glucosamine kinase (303 aa).

ATP is bound by residues 4–11 and 133–140; these read GFDMGGTK and GVGGGLIV. Positions 157, 177, 179, and 184 each coordinate Zn(2+).

This sequence belongs to the ROK (NagC/XylR) family. NagK subfamily.

The enzyme catalyses N-acetyl-D-glucosamine + ATP = N-acetyl-D-glucosamine 6-phosphate + ADP + H(+). Its pathway is cell wall biogenesis; peptidoglycan recycling. Its function is as follows. Catalyzes the phosphorylation of N-acetyl-D-glucosamine (GlcNAc) derived from cell-wall degradation, yielding GlcNAc-6-P. This is N-acetyl-D-glucosamine kinase from Yersinia enterocolitica serotype O:8 / biotype 1B (strain NCTC 13174 / 8081).